A 157-amino-acid polypeptide reads, in one-letter code: Secreted effector protein See1 (157 aa).

The signal sequence occupies residues 1–21 (MLFTTFVSLLLVILCLVHVSA). Positions 124-157 (SYRYGDSHGNSREAEYSVADHQSASGEYKFGPTT) are disordered. Basic and acidic residues predominate over residues 128–138 (GDSHGNSREAE).

Interacts with a maize homolog of SGT1, a factor acting in cell cycle progression in yeast Saccharomyces cerevisiae and an important component of plant and human innate immunity.

The protein resides in the secreted. Its subcellular location is the host cytoplasm. It is found in the host nucleus. Its function is as follows. Effector protein involved in the induction of tumors in infected plant tissues by the fungus. Required for the reactivation of plant DNA synthesis, which is crucial for tumor progression in leaf cells. Interferes with the MAPK-triggered phosphorylation of maize SGT1 at a monocot-specific phosphorylation site, resulting in both modulation of immune responses and reactivation of DNA synthesis during leaf tumor formation. The polypeptide is Secreted effector protein See1 (Mycosarcoma maydis (Corn smut fungus)).